Reading from the N-terminus, the 99-residue chain is Cell division topological specificity factor (99 aa).

Belongs to the MinE family.

Its function is as follows. Prevents the cell division inhibition by proteins MinC and MinD at internal division sites while permitting inhibition at polar sites. This ensures cell division at the proper site by restricting the formation of a division septum at the midpoint of the long axis of the cell. The protein is Cell division topological specificity factor of Tolumonas auensis (strain DSM 9187 / NBRC 110442 / TA 4).